We begin with the raw amino-acid sequence, 373 residues long: Erythronate-4-phosphate dehydrogenase (373 aa).

Positions 45 and 67 each coordinate substrate. NAD(+)-binding positions include aspartate 147, 207 to 209 (ASR), and aspartate 233. Arginine 209 is an active-site residue. The active site involves glutamate 238. Residue histidine 255 is the Proton donor of the active site. Glycine 258 is a binding site for NAD(+).

The protein belongs to the D-isomer specific 2-hydroxyacid dehydrogenase family. PdxB subfamily. As to quaternary structure, homodimer.

It is found in the cytoplasm. The catalysed reaction is 4-phospho-D-erythronate + NAD(+) = (R)-3-hydroxy-2-oxo-4-phosphooxybutanoate + NADH + H(+). Its pathway is cofactor biosynthesis; pyridoxine 5'-phosphate biosynthesis; pyridoxine 5'-phosphate from D-erythrose 4-phosphate: step 2/5. Functionally, catalyzes the oxidation of erythronate-4-phosphate to 3-hydroxy-2-oxo-4-phosphonooxybutanoate. In Pseudoalteromonas translucida (strain TAC 125), this protein is Erythronate-4-phosphate dehydrogenase.